The chain runs to 8525 residues: Nebulin (8525 aa).

The tract at residues 34–70 is disordered; the sequence is TTTTRTSDYEQSETSKPALAQPALAQPASAKPVERRK. The span at 48-64 shows a compositional bias: low complexity; that stretch reads SKPALAQPALAQPASAK. 235 Nebulin repeats span residues 83–110, 112–146, 156–181, 182–216, 217–251, 252–286, 296–321, 323–357, 362–396, 403–431, 433–467, 501–535, 536–570, 572–606, 610–644, 680–714, 748–782, 783–817, 819–853, 857–891, 892–918, 923–957, 968–986, 992–1026, 1027–1061, 1063–1097, 1101–1135, 1136–1166, 1167–1201, 1212–1230, 1236–1270, 1271–1305, 1307–1341, 1345–1379, 1380–1407, 1411–1445, 1456–1474, 1480–1514, 1515–1549, 1551–1585, 1589–1623, 1624–1654, 1655–1689, 1697–1725, 1730–1758, 1759–1793, 1795–1829, 1833–1867, 1868–1894, 1899–1933, 1949–1962, 1968–2002, 2003–2037, 2039–2073, 2077–2111, 2112–2138, 2143–2177, 2188–2206, 2212–2246, 2247–2281, 2283–2317, 2321–2355, 2356–2382, 2387–2421, 2436–2449, 2455–2489, 2490–2524, 2526–2560, 2564–2598, 2599–2625, 2630–2664, 2679–2692, 2698–2732, 2733–2767, 2769–2803, 2807–2841, 2842–2868, 2873–2907, 2917–2935, 2941–2975, 2976–3010, 3012–3046, 3050–3084, 3085–3111, 3116–3150, 3158–3178, 3184–3218, 3219–3253, 3255–3289, 3293–3327, 3328–3354, 3359–3393, 3401–3421, 3427–3461, 3462–3496, 3498–3532, 3536–3570, 3571–3597, 3602–3636, 3643–3664, 3670–3704, 3705–3739, 3741–3775, 3779–3813, 3814–3840, 3845–3879, 3889–3907, 3913–3947, 3948–3982, 3984–4018, 4022–4056, 4057–4083, 4088–4122, 4132–4149, 4156–4190, 4191–4225, 4227–4261, 4265–4299, 4300–4326, 4331–4365, 4375–4392, 4399–4433, 4434–4468, 4470–4504, 4508–4542, 4543–4569, 4574–4608, 4618–4635, 4642–4676, 4677–4711, 4713–4747, 4751–4785, 4786–4812, 4817–4851, 4861–4878, 4885–4919, 4920–4954, 4956–4990, 4994–5028, 5029–5055, 5060–5094, 5104–5121, 5128–5162, 5163–5197, 5199–5233, 5237–5271, 5272–5298, 5303–5337, 5347–5364, 5371–5405, 5406–5440, 5442–5476, 5480–5514, 5515–5541, 5546–5580, 5588–5607, 5614–5648, 5649–5683, 5690–5718, 5722–5756, 5757–5783, 5788–5822, 5829–5853, 5856–5890, 5893–5924, 5926–5960, 5964–5998, 5999–6025, 6030–6064, 6071–6099, 6100–6134, 6135–6169, 6171–6205, 6209–6243, 6244–6274, 6275–6309, 6316–6344, 6345–6379, 6380–6414, 6416–6450, 6458–6488, 6489–6515, 6532–6554, 6561–6589, 6590–6624, 6626–6660, 6661–6695, 6697–6731, 6732–6766, 6767–6801, 6808–6836, 6837–6871, 6872–6906, 6907–6941, 6942–6976, 6977–7011, 7012–7046, 7053–7081, 7082–7110, 7125–7151, 7152–7186, 7188–7222, 7223–7257, 7258–7292, 7297–7327, 7328–7362, 7365–7399, 7402–7433, 7436–7470, 7479–7505, 7514–7542, 7543–7577, 7578–7612, 7619–7647, 7650–7684, 7687–7721, 7731–7759, 7760–7794, 7795–7829, 7830–7864, 7867–7888, 7892–7921, 7930–7957, 7961–7988, 7992–8013, 8016–8045, 8054–8075, 8078–8112, 8116–8143, 8147–8168, 8171–8205, 8209–8232, 8233–8267, 8269–8303, and 8304–8330; these read TPYI…KTKG, PYAS…VAKT, DIEH…DTKD, KYLL…ADKS, LFYP…EQQA, QFTP…NKIK, EVAN…NMKD, IYFM…KNKG, NVLP…KTKA, ETPK…KDIL, HYVG…EDRG, KFTQ…SEKF, KCHI…KSKA, KFDI…KNKG, GVLS…KTKA, HYVG…EDKG, KFTA…GEKF, KFDI…KSKG, GALS…KSKT, IYTA…VDYK, SYSY…SWMK, EMEK…KYRQ, KFTS…EIIH, KYNL…DLSK, GYDL…KAKG, GFQS…KTKS, KYNT…HSLH, HYTY…NWMK, DVEK…KYRQ, KFTS…DVKH, KYTM…DLIA, GNNV…KSKG, GFRS…NTKT, SYHT…NYKQ, HYTY…SFLK, EVEK…KYRQ, KFTS…KLKH, KYTI…KTIA, GFLS…ASKT, KYHT…QSYH, HYTL…NWMK, ESLE…KLKF, DTME…KDKT, TIHV…EEKK, GYDL…QAKG, GFRS…KSKT, SFHT…ANYR, TYNM…DFMK, KKAM…KYRQ, KYST…ADKT, KVHI…ESKK, GYDL…KGKG, SYHT…TNYK, KYIL…EWYK, QFKK…KDKT, KIHV…EALK, GYDL…KQLG, GFRS…KWKT, KFSS…VDYK, QWTC…WLRG, KRAS…KYRQ, KFTS…KDKT, QIHI…ELKR, GARN…KWKT, QWTC…WLKG, KRAT…VYRQ, KFSS…KDKT, TVHI…EAKR, GYDM…KQLG, GARA…KWKT, QWTC…WMRG, DVEK…IYRQ, QIHI…EAKK, EWTC…WLRG, SMDV…IYRQ, QVHI…EAKK, GARA…KYKT, RYSS…VDYK, EWIC…WMKG, DSLE…IYRQ, KFTS…NDKK, TIHV…ESKK, KFSS…IDYK, KFTC…ADKT, SIHV…ESKM, DYDL…KQKG, GAQS…KWKT, KFSS…IDYR, EMNR…RLYR, SFTS…KDKS, NITI…DAKQ, GYDI…KQLG, GFRT…KSKG, IHNT…IDYR, EVMR…RLYR, KFTS…KEKA, NVNV…DVKM, GYDL…KQKG, GCRS…DHKA, KISI…VDYR, HWSC…WLRG, NITI…DTKQ, RWSC…WLRG, SPEV…SVYR, KYTS…KDKT, SIHI…EMKA, DAIP…KQKG, GTLT…KWKA, KIQS…MDYR, DSVS…TKIE, NFTP…ATKS, TLTE…RQKA, GYIL…KQKG, GVPT…KTKA, KINI…IDYR, QWMC…WLRG, DSVD…ENYP, NFRS…KAKG, KYTF…GTKA, GYTL…KQKG, AGKV…DTKA, NVHI…HYFH, QWTS…WLKG, DTPQ…ENLQ, NYNL…QIKD, KYTT…RVKA, SYIL…KFKA, VDDD…KNKM, KIHI…IDYR, HVRK…WLKG, DTPE…KTRN, DYKL…HSVR, KVAP…TLPT, GYRL…HTKA, GYTL…KLKD, KIHT…KMQG, HMIS…VLKG, DTPD…KMRD, KYKV…KQKS, IFTS…KERP, HHHA…KMKD, KYTP…KTKG, KYHT…SQLG, IWRS…WLKG, DTPD…RTKS, DFKY…YKSS, PDML…KSKD, KFTS…KAKP, GYTT…RNKS, NCTI…ANKA, HWKW…FLKG, VTDD…KERG, TCHA…KHLA, SYTT…KEKG, NYSI…DAKE, HYTT…KEGS, PDIE…KEKG, DSQL…KLHK, PVTD…KSKG, HYHT…KERG, ETPT…ESIK, NLTG…ESIR, GLTE…LEVK, ETPD…MEKA, NFTS…KSMS, YYET…NSKG, KITV…PGTA, KTPE…KYKE, QGTP…KENL, TPEI…KGIP, TPEM…KGTP, TPEM…YKEN, KGIP…KENL, KGTP…KGTP, KATA…KATP, TPEM…ENMR, KATP…KQIQ, KAAY…KHKG, and CFTP…INYR. The segment at 8313–8468 is interaction with SVIL; that stretch reads ITERVKKNMQ…SIPSHPSTAG (156 aa). Disordered stretches follow at residues 8385–8422 and 8439–8463; these read QAQR…LSTY and TTEL…IPSH. Residues 8405–8419 show a composition bias toward basic and acidic residues; sequence GEEKSEHSEAPDHHL. Residues 8444-8459 show a composition bias toward low complexity; it reads QQRSSSVATQQTTVSS. An SH3 domain is found at 8466 to 8525; sequence TAGKIFRAMYDYMAADADEVSFKDGDAIINVQAIDEGWMYGTVQRTGRTGMLPANYVEAI.

In terms of assembly, monomer and homooligomer. Interacts with TTN/titin. Interacts with SVIL. Interacts (via nebulin repeats 160-164) with DES. As to expression, expressed in skeletal muscle (at protein level). Located in the thin filament of striated muscle.

It is found in the cytoplasm. Its subcellular location is the myofibril. The protein resides in the sarcomere. It localises to the cytoskeleton. In terms of biological role, this giant muscle protein may be involved in maintaining the structural integrity of sarcomeres and the membrane system associated with the myofibrils. Binds and stabilize F-actin. The protein is Nebulin (NEB) of Homo sapiens (Human).